The chain runs to 466 residues: Asparagine--tRNA ligase (466 aa).

This sequence belongs to the class-II aminoacyl-tRNA synthetase family. As to quaternary structure, homodimer.

The protein resides in the cytoplasm. It catalyses the reaction tRNA(Asn) + L-asparagine + ATP = L-asparaginyl-tRNA(Asn) + AMP + diphosphate + H(+). The sequence is that of Asparagine--tRNA ligase from Salmonella paratyphi A (strain ATCC 9150 / SARB42).